A 421-amino-acid chain; its full sequence is GTPase Obg (421 aa).

An Obg domain is found at 1 to 158; it reads MYFIDEAINE…FKIKTELKIL (158 aa). The region spanning 159 to 324 is the OBG-type G domain; the sequence is ADVGLIGYPS…LKYKMLEMIK (166 aa). GTP is bound by residues 165–172, 190–194, 211–214, 278–281, and 305–307; these read GYPSVGKS, FTTLK, DLPG, NKMD, and SLL. The Mg(2+) site is built by serine 172 and threonine 192. The OCT domain occupies 342-421; it reads TLEEEKPDFV…ICDRVFEFIT (80 aa).

Belongs to the TRAFAC class OBG-HflX-like GTPase superfamily. OBG GTPase family. In terms of assembly, monomer. Requires Mg(2+) as cofactor.

Its subcellular location is the cytoplasm. Its function is as follows. An essential GTPase which binds GTP, GDP and possibly (p)ppGpp with moderate affinity, with high nucleotide exchange rates and a fairly low GTP hydrolysis rate. Plays a role in control of the cell cycle, stress response, ribosome biogenesis and in those bacteria that undergo differentiation, in morphogenesis control. This is GTPase Obg from Phytoplasma mali (strain AT).